The primary structure comprises 253 residues: Protein phosphatase CheZ (253 aa).

Positions 1–84 are disordered; it reads MTQEELDALM…EWPPPPPTEE (84 aa). A compositionally biased stretch (basic and acidic residues) spans 21–69; it reads LETKEETKEEAKEEAKEEAKEEAKEKEEIKEESSSQKMTVKKEDAEKYG.

This sequence belongs to the CheZ family. Interacts with ChePep; this interaction is essential for each other polar localization.

The protein resides in the cytoplasm. Functionally, plays an important role in bacterial chemotaxis signal transduction pathway by accelerating the dephosphorylation of phosphorylated CheY (CheY-P). Also dephosphorylates CheV2 but not CheV1 or CheV3. In addition, forms a distinct chemotaxis regulatory complex with ChePep independently of the core chemotaxis signaling proteins. This chain is Protein phosphatase CheZ, found in Helicobacter pylori (strain ATCC 700392 / 26695) (Campylobacter pylori).